The chain runs to 256 residues: Small ribosomal subunit protein eS1 (256 aa).

Ala2 is modified (N-acetylalanine; partial).

The protein belongs to the eukaryotic ribosomal protein eS1 family. As to quaternary structure, component of the small ribosomal subunit. Mature ribosomes consist of a small (40S) and a large (60S) subunit. The 40S subunit contains about 33 different proteins and 1 molecule of RNA (18S). The 60S subunit contains about 49 different proteins and 3 molecules of RNA (25S, 5.8S and 5S).

It localises to the cytoplasm. The sequence is that of Small ribosomal subunit protein eS1 from Candida tropicalis (strain ATCC MYA-3404 / T1) (Yeast).